The following is a 497-amino-acid chain: Cytochrome P450 26A1 (497 aa).

Cysteine 442 is a binding site for heme.

It belongs to the cytochrome P450 family. Heme is required as a cofactor.

It localises to the endoplasmic reticulum membrane. It is found in the microsome membrane. It catalyses the reaction all-trans-retinoate + reduced [NADPH--hemoprotein reductase] + O2 = all-trans-(4S)-hydroxyretinoate + oxidized [NADPH--hemoprotein reductase] + H2O + H(+). The catalysed reaction is all-trans-(4S)-hydroxyretinoate + reduced [NADPH--hemoprotein reductase] + O2 = all-trans-(4S,16)-dihydroxyretinoate + oxidized [NADPH--hemoprotein reductase] + H2O + H(+). The enzyme catalyses all-trans-retinoate + reduced [NADPH--hemoprotein reductase] + O2 = all-trans-18-hydroxyretinoate + oxidized [NADPH--hemoprotein reductase] + H2O + H(+). Functionally, a cytochrome P450 monooxygenase involved in the metabolism of retinoates (RAs), the active metabolites of vitamin A, and critical signaling molecules in animals. RAs exist as at least four different isomers: all-trans-RA (atRA), 9-cis-RA, 13-cis-RA, and 9,13-dicis-RA, where atRA is considered to be the biologically active isomer, although 9-cis-RA and 13-cis-RA also have activity. Catalyzes the hydroxylation of atRA primarily at C-4 and C-18, thereby contributing to the regulation of atRA homeostasis and signaling. Hydroxylation of atRA limits its biological activity and initiates a degradative process leading to its eventual elimination. Involved in the convertion of atRA to all-trans-4-oxo-RA. Able to metabolize other RAs such as 9-cis, 13-cis and 9,13-di-cis RA. Can oxidize all-trans-13,14-dihydroretinoate (DRA) to metabolites which could include all-trans-4-oxo-DRA, all-trans-4-hydroxy-DRA, all-trans-5,8-epoxy-DRA, and all-trans-18-hydroxy-DRA. May play a role in the oxidative metabolism of xenobiotics such as tazarotenic acid. This is Cytochrome P450 26A1 from Mus musculus (Mouse).